Reading from the N-terminus, the 258-residue chain is Undecaprenyl-diphosphatase (258 aa).

A run of 8 helical transmembrane segments spans residues 1 to 21, 42 to 62, 71 to 91, 96 to 116, 134 to 154, 173 to 193, 211 to 231, and 237 to 257; these read MSII…FLPV, LKCF…FTFF, LWIK…LLYS, LFSQ…FIVV, GISY…MVPG, QTAA…ATFY, LFLL…KMFL, and FDYI…MFFV.

It belongs to the UppP family.

Its subcellular location is the cell inner membrane. The catalysed reaction is di-trans,octa-cis-undecaprenyl diphosphate + H2O = di-trans,octa-cis-undecaprenyl phosphate + phosphate + H(+). In terms of biological role, catalyzes the dephosphorylation of undecaprenyl diphosphate (UPP). Confers resistance to bacitracin. The polypeptide is Undecaprenyl-diphosphatase (Campylobacter hominis (strain ATCC BAA-381 / DSM 21671 / CCUG 45161 / LMG 19568 / NCTC 13146 / CH001A)).